The primary structure comprises 76 residues: ATP synthase subunit 9, mitochondrial (76 aa).

2 helical membrane-spanning segments follow: residues 11-31 and 53-73; these read IGAGLATIGLTGVGAGVGIVF and ILGFALTEAVALFALMMAFLI.

Belongs to the ATPase C chain family. In terms of assembly, F-type ATPases have 2 components, CF(1) - the catalytic core - and CF(0) - the membrane proton channel. CF(1) has five subunits: alpha(3), beta(3), gamma(1), delta(1), epsilon(1). CF(0) has three main subunits: a, b and c.

It is found in the mitochondrion membrane. This protein is one of the chains of the nonenzymatic membrane component (F0) of mitochondrial ATPase. In Chondrus crispus (Carrageen Irish moss), this protein is ATP synthase subunit 9, mitochondrial (ATP9).